We begin with the raw amino-acid sequence, 107 residues long: Cytochrome c2 (107 aa).

Positions 14, 17, 18, and 80 each coordinate heme c.

The protein belongs to the cytochrome c family. In terms of processing, binds 1 heme c group covalently per subunit.

Cytochrome c2 is found mainly in purple, non-sulfur, photosynthetic bacteria where it functions as the electron donor to the oxidized bacteriochlorophyll in the photophosphorylation pathway. However, it may also have a role in the respiratory chain and is found in some non-photosynthetic bacteria. The sequence is that of Cytochrome c2 from Rhodoblastus acidophilus (Rhodopseudomonas acidophila).